The chain runs to 340 residues: Putative cystathionine beta-lyase (340 aa).

The residue at position 208 (Lys-208) is an N6-(pyridoxal phosphate)lysine.

Belongs to the trans-sulfuration enzymes family. Pyridoxal 5'-phosphate is required as a cofactor.

The enzyme catalyses L,L-cystathionine + H2O = L-homocysteine + pyruvate + NH4(+). It carries out the reaction an S-substituted L-cysteine + H2O = a thiol + pyruvate + NH4(+). The protein operates within amino-acid biosynthesis; L-methionine biosynthesis via de novo pathway; L-homocysteine from L-cystathionine: step 1/1. The polypeptide is Putative cystathionine beta-lyase (IRC7) (Saccharomyces cerevisiae (strain ATCC 204508 / S288c) (Baker's yeast)).